A 68-amino-acid chain; its full sequence is Protein SlyX homolog (68 aa).

Belongs to the SlyX family.

This chain is Protein SlyX homolog, found in Pseudomonas putida (strain ATCC 700007 / DSM 6899 / JCM 31910 / BCRC 17059 / LMG 24140 / F1).